Reading from the N-terminus, the 145-residue chain is MEGYDNGSLYAPFLSLKSHSKPELHQGEEESSKVRSEGCSKSVESSKKKGKKQRYAFQTRSQVDILDDGYRWRKYGQKAVKNNKFPRSYYRCTYGGCNVKKQVQRLTVDQEVVVTTYEGVHSHPIEKSTENFEHILTQMQIYSSF.

A compositionally biased stretch (basic and acidic residues) spans 20 to 38 (SKPELHQGEEESSKVRSEG). Residues 20–55 (SKPELHQGEEESSKVRSEGCSKSVESSKKKGKKQRY) are disordered. Residues 61–126 (SQVDILDDGY…YEGVHSHPIE (66 aa)) constitute a DNA-binding region (WRKY).

It belongs to the WRKY group II-c family.

The protein resides in the nucleus. Functionally, transcription factor. Interacts specifically with the W box (5'-(T)TGAC[CT]-3'), a frequently occurring elicitor-responsive cis-acting element. This chain is Probable WRKY transcription factor 75 (WRKY75), found in Arabidopsis thaliana (Mouse-ear cress).